A 351-amino-acid polypeptide reads, in one-letter code: Holliday junction branch migration complex subunit RuvB (351 aa).

Residues 4–199 (DNPQFNQWYE…FGIINSLQYY (196 aa)) are large ATPase domain (RuvB-L). Residues L38, R39, G80, K83, T84, T85, 146 to 148 (EDY), R189, Y199, and R236 contribute to the ATP site. Position 84 (T84) interacts with Mg(2+). The segment at 200–270 (TPEELQQIVV…IVTIGLDKLR (71 aa)) is small ATPAse domain (RuvB-S). Residues 273–351 (NRGLDETDHK…HLGHAYQRKL (79 aa)) form a head domain (RuvB-H) region. DNA-binding residues include R328 and R333.

This sequence belongs to the RuvB family. Homohexamer. Forms an RuvA(8)-RuvB(12)-Holliday junction (HJ) complex. HJ DNA is sandwiched between 2 RuvA tetramers; dsDNA enters through RuvA and exits via RuvB. An RuvB hexamer assembles on each DNA strand where it exits the tetramer. Each RuvB hexamer is contacted by two RuvA subunits (via domain III) on 2 adjacent RuvB subunits; this complex drives branch migration. In the full resolvosome a probable DNA-RuvA(4)-RuvB(12)-RuvC(2) complex forms which resolves the HJ.

The protein resides in the cytoplasm. It catalyses the reaction ATP + H2O = ADP + phosphate + H(+). In terms of biological role, the RuvA-RuvB-RuvC complex processes Holliday junction (HJ) DNA during genetic recombination and DNA repair, while the RuvA-RuvB complex plays an important role in the rescue of blocked DNA replication forks via replication fork reversal (RFR). RuvA specifically binds to HJ cruciform DNA, conferring on it an open structure. The RuvB hexamer acts as an ATP-dependent pump, pulling dsDNA into and through the RuvAB complex. RuvB forms 2 homohexamers on either side of HJ DNA bound by 1 or 2 RuvA tetramers; 4 subunits per hexamer contact DNA at a time. Coordinated motions by a converter formed by DNA-disengaged RuvB subunits stimulates ATP hydrolysis and nucleotide exchange. Immobilization of the converter enables RuvB to convert the ATP-contained energy into a lever motion, pulling 2 nucleotides of DNA out of the RuvA tetramer per ATP hydrolyzed, thus driving DNA branch migration. The RuvB motors rotate together with the DNA substrate, which together with the progressing nucleotide cycle form the mechanistic basis for DNA recombination by continuous HJ branch migration. Branch migration allows RuvC to scan DNA until it finds its consensus sequence, where it cleaves and resolves cruciform DNA. This Leuconostoc mesenteroides subsp. mesenteroides (strain ATCC 8293 / DSM 20343 / BCRC 11652 / CCM 1803 / JCM 6124 / NCDO 523 / NBRC 100496 / NCIMB 8023 / NCTC 12954 / NRRL B-1118 / 37Y) protein is Holliday junction branch migration complex subunit RuvB.